Consider the following 210-residue polypeptide: Transcription factor ALC (210 aa).

Positions Met1–Thr49 are disordered. The segment covering Leu27–Glu48 has biased composition (polar residues). The 50-residue stretch at Ile93 to Leu142 folds into the bHLH domain.

As to quaternary structure, homodimer. In terms of tissue distribution, expressed constitutively in roots, leaves, stems, and flowers. Confined to the valve margins of the silique.

It is found in the nucleus. In terms of biological role, required for the dehiscence of fruit, especially for the separation of the valve cells from the replum. Promotes the differentiation of a strip of labile nonlignified cells sandwiched between layers of lignified cells. This chain is Transcription factor ALC (ALC), found in Arabidopsis thaliana (Mouse-ear cress).